The chain runs to 355 residues: Anthocyanin synthase (355 aa).

Tyr145 and Lys216 together coordinate substrate. Positions 211–310 (LLLQMKINYY…RISWAVFCEP (100 aa)) constitute a Fe2OG dioxygenase domain. 218–220 (NYY) is a 2-oxoglutarate binding site. His235 is a binding site for Fe cation. Substrate is bound at residue Thr236. Residues Asp237 and His291 each coordinate Fe cation. 2-oxoglutarate contacts are provided by residues Arg301 and 301–303 (RIS). Residues Glu309 and Lys344 each coordinate substrate.

This sequence belongs to the iron/ascorbate-dependent oxidoreductase family. It depends on L-ascorbate as a cofactor. The cofactor is Fe(2+). Expressed in stems and leaves. Expressed at low levels in ovaries.

It carries out the reaction a (2R,3S,4S)-leucoanthocyanidin + 2-oxoglutarate + O2 = a 4-H-anthocyanidin with a 3-hydroxy group + succinate + CO2 + 2 H2O. It participates in pigment biosynthesis; anthocyanin biosynthesis. Its function is as follows. Involved in anthocyanin biosynthesis by catalyzing the oxidation of leucoanthocyanidins into anthocyanidins. Required for the accumulation of anthocyanin in red-fleshed kiwifruit varieties. This Actinidia chinensis var. chinensis (Chinese soft-hair kiwi) protein is Anthocyanin synthase.